The sequence spans 383 residues: Outer membrane protein assembly factor BamB (383 aa).

The first 23 residues, 1-23, serve as a signal peptide directing secretion; sequence MMLLKRCNRRALVALAAVLLLAA. Cysteine 24 carries the N-palmitoyl cysteine lipid modification. Cysteine 24 carries S-diacylglycerol cysteine lipidation.

This sequence belongs to the BamB family. As to quaternary structure, part of the Bam complex.

It localises to the cell outer membrane. Functionally, part of the outer membrane protein assembly complex, which is involved in assembly and insertion of beta-barrel proteins into the outer membrane. This is Outer membrane protein assembly factor BamB from Alkalilimnicola ehrlichii (strain ATCC BAA-1101 / DSM 17681 / MLHE-1).